Reading from the N-terminus, the 347-residue chain is MRIEEDLKLGFKDVLIRPKRSTLKSRSDVELERQFTFKHSGQTWSGVPIIAANMDTVGTFEMAQALAGFDILTAVHKHYTVEEWAAFINTASADVLKHVMVSTGTSDADFAKTAQILALNPALNFVCIDVANGYSEHFVQFVAKAREAWPTKTICAGNVVTGEMCEELILSGADIVKVGIGPGSVCTTRVKTGVGYPQLSAVIECADAAHGLGGMIVSDGGCTMPGDVAKAFGGGADFVMLGGMLAGHEESGGSVVEENGEKFMLFYGMSSESAMNRHVGGVAKYRAAEGKTVKLPLRGPVGNTARDILGGLRSACTYVGASRLKELTKRTTFIRVQEQENRIFNNL.

108–131 (ADFAKTAQILALNPALNFVCIDVA) serves as a coordination point for NADP(+). K(+) is bound by residues glycine 181 and glycine 183. Cysteine 186 (thioimidate intermediate) is an active-site residue. 216 to 239 (IVSDGGCTMPGDVAKAFGGGADFV) is a binding site for NADP(+).

The protein belongs to the IMPDH/GMPR family. GuaC type 1 subfamily. Homotetramer.

The enzyme catalyses IMP + NH4(+) + NADP(+) = GMP + NADPH + 2 H(+). In terms of biological role, catalyzes the irreversible NADPH-dependent deamination of GMP to IMP. It functions in the conversion of nucleobase, nucleoside and nucleotide derivatives of G to A nucleotides, and in maintaining the intracellular balance of A and G nucleotides. The sequence is that of GMP reductase from Salmonella arizonae (strain ATCC BAA-731 / CDC346-86 / RSK2980).